The following is a 182-amino-acid chain: uncharacterized protein (182 aa).

The next 2 helical transmembrane spans lie at 76–96 (LLLA…LALA) and 114–130 (LDLL…LIGA).

The protein resides in the membrane. This is an uncharacterized protein from Saccharomyces cerevisiae (strain ATCC 204508 / S288c) (Baker's yeast).